The primary structure comprises 383 residues: tRNA-specific 2-thiouridylase MnmA (383 aa).

ATP is bound by residues 10 to 17 (AMSGGVDS) and Met-36. Cys-107 functions as the Nucleophile in the catalytic mechanism. Cys-107 and Cys-206 form a disulfide bridge. Residue Gly-131 participates in ATP binding. Residues 155–157 (KDQ) form an interaction with tRNA region. Cys-206 functions as the Cysteine persulfide intermediate in the catalytic mechanism. The tract at residues 315 to 316 (RY) is interaction with tRNA.

The protein belongs to the MnmA/TRMU family.

The protein resides in the cytoplasm. The catalysed reaction is S-sulfanyl-L-cysteinyl-[protein] + uridine(34) in tRNA + AH2 + ATP = 2-thiouridine(34) in tRNA + L-cysteinyl-[protein] + A + AMP + diphosphate + H(+). Functionally, catalyzes the 2-thiolation of uridine at the wobble position (U34) of tRNA, leading to the formation of s(2)U34. This chain is tRNA-specific 2-thiouridylase MnmA, found in Salinibacter ruber (strain DSM 13855 / M31).